The primary structure comprises 131 residues: Small ribosomal subunit protein bS6 (131 aa).

Positions 96–131 (VTEASPMAKAKDERDSRRGPAGDRSYDEANAEEIAE) are disordered. Residues 104 to 122 (KAKDERDSRRGPAGDRSYD) show a composition bias toward basic and acidic residues.

This sequence belongs to the bacterial ribosomal protein bS6 family.

In terms of biological role, binds together with bS18 to 16S ribosomal RNA. The polypeptide is Small ribosomal subunit protein bS6 (Shewanella sp. (strain MR-4)).